Here is a 409-residue protein sequence, read N- to C-terminus: Peptidase T (409 aa).

Residue H78 participates in Zn(2+) binding. D80 is an active-site residue. Residue D140 participates in Zn(2+) binding. The active-site Proton acceptor is E173. Positions 174, 196, and 379 each coordinate Zn(2+).

It belongs to the peptidase M20B family. The cofactor is Zn(2+).

The protein resides in the cytoplasm. It carries out the reaction Release of the N-terminal residue from a tripeptide.. Cleaves the N-terminal amino acid of tripeptides. This is Peptidase T from Salmonella choleraesuis (strain SC-B67).